Reading from the N-terminus, the 368-residue chain is Putative zinc metalloprotease Cj1068 (368 aa).

His36 lines the Zn(2+) pocket. Residue Glu37 is part of the active site. His40 contacts Zn(2+). 3 helical membrane passes run Ile112 to Gly134, Phe291 to Ile313, and Thr338 to Asn360. The region spanning Ala126–Lys197 is the PDZ domain.

This sequence belongs to the peptidase M50B family. Requires Zn(2+) as cofactor.

It localises to the cell inner membrane. This is Putative zinc metalloprotease Cj1068 from Campylobacter jejuni subsp. jejuni serotype O:2 (strain ATCC 700819 / NCTC 11168).